A 1128-amino-acid polypeptide reads, in one-letter code: MMPMFLTVYLSNNEQHFTEVPVTPETICRDVVDLCKEPGESDCHLAEVWCGSERPVADNERMFDVLQRFGSQRNEVRFFLRHERPPGRDIVSGPRSQDPSLKRNGVKVPGEYRRKENGVNSPRMDLTLAELQEMASRQQQQIEAQQQLLATKEQRLKFLKQQDQRQQQQVAEQEKLKRLKEIAENQEAKLKKVRALKGHVEQKRLSNGKLVEEIEQMNNLFQQKQRELVLAVSKVEELTRQLEMLKNGRIDSHHDNQSAVAELDRLYKELQLRNKLNQEQNAKLQQQRECLNKRNSEVAVMDKRVNELRDRLWKKKAALQQKENLPVSSDGNLPQQAASAPSRVAAVGPYIQSSTMPRMPSRPELLVKPALPDGSLVIQASEGPMKIQTLPNMRSGAASQTKGSKIHPVGPDWSPSNADLFPSQGSASVPQSTGNALDQVDDGEVPLREKEKKVRPFSMFDAVDQSNAPPSFGTLRKNQSSEDILRDAQVANKNVAKVPPPVPTKPKQINLPYFGQTNQPPSDIKPDGSSQQLSTVVPSMGTKPKPAGQQPRVLLSPSIPSVGQDQTLSPGSKQESPPAAAVRPFTPQPSKDTLLPPFRKPQTVAASSIYSMYTQQQAPGKNFQQAVQSALTKTHTRGPHFSSVYGKPVIAAAQNQQQHPENIYSNSQGKPGSPEPETEPVSSVQENHENERIPRPLSPTKLLPFLSNPYRNQSDADLEALRKKLSNAPRPLKKRSSITEPEGPNGPNIQKLLYQRTTIAAMETISVPSYPSKSASVTASSESPVEIQNPYLHVEPEKEVVSLVPESLSPEDVGNASTENSDMPAPSPGLDYEPEGVPDNSPNLQNNPEEPNPEAPHVLDVYLEEYPPYPPPPYPSGEPEGPGEDSVSMRPPEITGQVSLPPGKRTNLRKTGSERIAHGMRVKFNPLALLLDSSLEGEFDLVQRIIYEVDDPSLPNDEGITALHNAVCAGHTEIVKFLVQFGVNVNAADSDGWTPLHCAASCNNVQVCKFLVESGAAVFAMTYSDMQTAADKCEEMEEGYTQCSQFLYGVQEKMGIMNKGVIYALWDYEPQNDDELPMKEGDCMTIIHREDEDEIEWWWARLNDKEGYVPRNLLGLYPRIKPRQRSLA.

2 disordered regions span residues 86–106 and 322–341; these read PGRD…RNGV and KENL…ASAP. Over residues 322–339 the composition is skewed to polar residues; it reads KENLPVSSDGNLPQQAAS. Residues 332-348 form an interaction with APPBP1 region; the sequence is NLPQQAASAPSRVAAVG. Serine 480 bears the Phosphoserine mark. 2 disordered regions span residues 494–598 and 655–706; these read NVAK…LPPF and NQQQ…LPFL. The segment covering 528 to 537 has biased composition (polar residues); it reads GSSQQLSTVV. A phosphoserine mark is found at serine 556, serine 569, serine 572, and serine 576. A compositionally biased stretch (polar residues) spans 558–575; sequence SIPSVGQDQTLSPGSKQE. The segment covering 655 to 670 has biased composition (polar residues); sequence NQQQHPENIYSNSQGK. A phosphoserine mark is found at serine 698, serine 714, and serine 737. 2 disordered regions span residues 724 to 748 and 802 to 909; these read KLSN…NGPN and SLVP…TNLR. The span at 840-849 shows a compositional bias: low complexity; that stretch reads NSPNLQNNPE. The SH3-binding motif lies at 866–875; it reads YPPYPPPPYP. Over residues 867-876 the composition is skewed to pro residues; that stretch reads PPYPPPPYPS. Residues 876–1128 form a mediates interaction with APC2 region; the sequence is SGEPEGPGED…RIKPRQRSLA (253 aa). ANK repeat units lie at residues 926-957, 958-990, 991-1024, and 1025-1067; these read PLAL…LPND, EGIT…AADS, DGWT…MTYS, and DMQT…ALWD. One can recognise an SH3 domain in the interval 1057–1119; sequence MNKGVIYALW…PRNLLGLYPR (63 aa).

This sequence belongs to the ASPP family. Interacts with P53/TP53; the interaction promotes pro-apoptotic activity. Interacts with BCL2. Interacts with protein phosphatase 1. Interacts with RELA NF-kappa-B subunit. This interaction probably prevents the activation of apoptosis, possibly by preventing its interaction with TP53. Interacts with APC2 and NAE1. Interacts with DDX42 (via the C-terminus); the interaction is not inhibited by TP53BP2 ubiquitination and is independent of p53/TP53. As to expression, widely expressed. Expressed in spleen, thymus, prostate, testis, ovary, small intestine, colon and peripheral blood leukocyte. Reduced expression in breast carcinomas expressing a wild-type TP53 protein. Overexpressed in lung cancer cell lines.

The protein localises to the cytoplasm. It localises to the perinuclear region. The protein resides in the nucleus. Regulator that plays a central role in regulation of apoptosis and cell growth via its interactions with proteins such as TP53. Regulates TP53 by enhancing the DNA binding and transactivation function of TP53 on the promoters of proapoptotic genes in vivo. Inhibits the ability of NAE1 to conjugate NEDD8 to CUL1, and thereby decreases NAE1 ability to induce apoptosis. Impedes cell cycle progression at G2/M. Its apoptosis-stimulating activity is inhibited by its interaction with DDX42. The chain is Apoptosis-stimulating of p53 protein 2 (TP53BP2) from Homo sapiens (Human).